The following is a 201-amino-acid chain: CASP-like protein 2B2 (201 aa).

At 1–28 (MSYLGVGVSPGNVTGSSTKMKLIDRKVR) the chain is on the cytoplasmic side. A helical transmembrane segment spans residues 29-49 (VTELILRSLVCAFALVAAILV). Residues 50 to 71 (ATDVQVREIFTIQKKAKFTDMK) are Extracellular-facing. The helical transmembrane segment at 72 to 92 (ALVFLVVINGIAAGYSLVQAV) threads the bilayer. At 93–108 (CCLVGLMKGSVLLSEP) the chain is on the cytoplasmic side. A helical membrane pass occupies residues 109-129 (LAWAIFFGDQAVAYLCVAGVA). The Extracellular portion of the chain corresponds to 130-166 (AAAQSAAFAKLGQPELQWMKICDMYGKFCNQVGEGIA). Residues 167–187 (SALFACIGMVLISCISAFGVF) form a helical membrane-spanning segment. Residues 188-201 (RLYGGSKPRQSSRW) lie on the Cytoplasmic side of the membrane.

It belongs to the Casparian strip membrane proteins (CASP) family. Homodimer and heterodimers.

The protein localises to the cell membrane. This is CASP-like protein 2B2 from Arabidopsis lyrata subsp. lyrata (Lyre-leaved rock-cress).